Here is a 291-residue protein sequence, read N- to C-terminus: N-acetylmannosamine kinase (291 aa).

Residues Ala5–Lys12 and Gly132–Ser139 each bind ATP. 4 residues coordinate Zn(2+): His156, Cys166, Cys168, and Cys173.

This sequence belongs to the ROK (NagC/XylR) family. NanK subfamily. As to quaternary structure, homodimer.

It catalyses the reaction an N-acyl-D-mannosamine + ATP = an N-acyl-D-mannosamine 6-phosphate + ADP + H(+). It functions in the pathway amino-sugar metabolism; N-acetylneuraminate degradation; D-fructose 6-phosphate from N-acetylneuraminate: step 2/5. Its function is as follows. Catalyzes the phosphorylation of N-acetylmannosamine (ManNAc) to ManNAc-6-P. This is N-acetylmannosamine kinase from Shigella boydii serotype 18 (strain CDC 3083-94 / BS512).